The sequence spans 317 residues: Small ribosomal subunit biogenesis GTPase RsgA (317 aa).

The CP-type G domain maps to 88–249 (DQYKSKLFAA…LIDSPGFQEF (162 aa)). Residues 136 to 139 (NKID) and 190 to 198 (GQSGMGKST) each bind GTP. Residues Cys-273, Cys-278, His-280, and Cys-286 each contribute to the Zn(2+) site.

This sequence belongs to the TRAFAC class YlqF/YawG GTPase family. RsgA subfamily. As to quaternary structure, monomer. Associates with 30S ribosomal subunit, binds 16S rRNA. It depends on Zn(2+) as a cofactor.

It localises to the cytoplasm. Functionally, one of several proteins that assist in the late maturation steps of the functional core of the 30S ribosomal subunit. Helps release RbfA from mature subunits. May play a role in the assembly of ribosomal proteins into the subunit. Circularly permuted GTPase that catalyzes slow GTP hydrolysis, GTPase activity is stimulated by the 30S ribosomal subunit. The polypeptide is Small ribosomal subunit biogenesis GTPase RsgA (Paraburkholderia phymatum (strain DSM 17167 / CIP 108236 / LMG 21445 / STM815) (Burkholderia phymatum)).